The primary structure comprises 469 residues: 1-aminocyclopropane-1-carboxylate synthase 3 (469 aa).

At Lys-272 the chain carries N6-(pyridoxal phosphate)lysine. A disordered region spans residues 432 to 452 (APNATNHQNQQQSNANSKKKS). Positions 437 to 447 (NHQNQQQSNAN) are enriched in low complexity.

The protein belongs to the class-I pyridoxal-phosphate-dependent aminotransferase family. As to quaternary structure, homodimer. The cofactor is pyridoxal 5'-phosphate.

It catalyses the reaction S-adenosyl-L-methionine = 1-aminocyclopropane-1-carboxylate + S-methyl-5'-thioadenosine + H(+). Its pathway is alkene biosynthesis; ethylene biosynthesis via S-adenosyl-L-methionine; ethylene from S-adenosyl-L-methionine: step 1/2. In terms of biological role, catalyzes the formation of 1-aminocyclopropane-1-carboxylate, a direct precursor of ethylene in higher plants. The sequence is that of 1-aminocyclopropane-1-carboxylate synthase 3 (ACS3) from Solanum lycopersicum (Tomato).